The primary structure comprises 203 residues: LexA repressor (203 aa).

The H-T-H motif DNA-binding region spans 28–48 (RAEIASQLGFRSPNAAEEHLK). Catalysis depends on for autocatalytic cleavage activity residues Ser-120 and Lys-157.

The protein belongs to the peptidase S24 family. As to quaternary structure, homodimer.

It carries out the reaction Hydrolysis of Ala-|-Gly bond in repressor LexA.. Its function is as follows. Represses a number of genes involved in the response to DNA damage (SOS response), including recA and lexA. Binds to the 16 bp palindromic sequence 5'-CTGTATATATATACAG-3'. In the presence of single-stranded DNA, RecA interacts with LexA causing an autocatalytic cleavage which disrupts the DNA-binding part of LexA, leading to derepression of the SOS regulon and eventually DNA repair. The sequence is that of LexA repressor from Proteus mirabilis (strain HI4320).